Consider the following 1184-residue polypeptide: MVLLWEPAGAWLALGLALALGPSVAAAAPRQDCTGVECPPLENCIEEALEPGACCATCVQQGCACEGYQYYDCLQGGFVRGRVPAGQSYFVDFGSTECSCPPGGGKISCQFMLCPELPPNCIEAVVVADSCPQCGQVGCVHAGHKYAAGHTVHLPPCRACHCPDAGGELICYQLPGCHGNFSDAEEGDPERHYEDPYSYDQEVAEVEAATALGGEVQAGAVQAGAGGPPAALGGGSQPLSTIQAPPWPAVLPRPTAAAALGPPAPVQAKARRVTEDSEEEEEEEEEREEMAVTEQLAAGGHRGLDGLPTTAPAGPSLPIQEERAEAGARAEAGARPEENLILDAQATSRSTGPEGVTHAPSLGKAALVPTQAVPGSPRDPVKPSPHNILSTSLPDAAWIPPTREVPRKPQVLPHSHVEEDTDPNSVHSIPRSSPEGSTKDLIETCCAAGQQWAIDNDECLEIPESGTEDNVCRTAQRHCCVSYLQEKSCMAGVLGAKEGETCGAEDNDSCGISLYKQCCDCCGLGLRVRAEGQSCESNPNLGYPCNHVMLSCCEGEEPLIVPEVRRPPEPAAAPRRVSEAEMAGREALSLGTEAELPNSLPGDDQDECLLLPGELCQHLCINTVGSYHCACFPGFSLQDDGRTCRPEGHPPQPEAPQEPALKSEFSQVASNTIPLPLPQPNTCKDNGPCKQVCSTVGGSAICSCFPGYAIMADGVSCEDINECVTDLHTCSRGEHCVNTLGSFHCYKALTCEPGYALKDGECEDVDECAMGTHTCQPGFLCQNTKGSFYCQARQRCMDGFLQDPEGNCVDINECTSLSEPCRPGFSCINTVGSYTCQRNPLICARGYHASDDGTKCVDVNECETGVHRCGEGQVCHNLPGSYRCDCKAGFQRDAFGRGCIDVNECWASPGRLCQHTCENTLGSYRCSCASGFLLAADGKRCEDVNECEAQRCSQECANIYGSYQCYCRQGYQLAEDGHTCTDIDECAQGAGILCTFRCLNVPGSYQCACPEQGYTMTANGRSCKDVDECALGTHNCSEAETCHNIQGSFRCLRFECPPNYVQVSKTKCERTTCHDFLECQNSPARITHYQLNFQTGLLVPAHIFRIGPAPAFTGDTIALNIIKGNEEGYFGTRRLNAYTGVVYLQRAVLEPRDFALDVEMKLWRQGSVTTFLAKMHIFFTTFAL.

A signal peptide spans 1–27 (MVLLWEPAGAWLALGLALALGPSVAAA). Residues 28–177 (APRQDCTGVE…ELICYQLPGC (150 aa)) are subdomain NA (Cys-rich). The tract at residues 28 to 444 (APRQDCTGVE…EGSTKDLIET (417 aa)) is n. The subdomain NB (Cys-free) stretch occupies residues 178–444 (HGNFSDAEEG…EGSTKDLIET (267 aa)). N-linked (GlcNAc...) asparagine glycosylation occurs at Asn-180. 2 disordered regions span residues 221 to 293 (VQAG…MAVT) and 399 to 437 (IPPTREVPRKPQVLPHSHVEEDTDPNSVHSIPRSSPEGS). Residues 224-236 (GAGGPPAALGGGS) are compositionally biased toward gly residues. Residues 252 to 261 (PRPTAAAALG) show a composition bias toward low complexity. Over residues 276–288 (DSEEEEEEEEERE) the composition is skewed to acidic residues. Ser-277 bears the Phosphoserine mark. Positions 423-436 (PNSVHSIPRSSPEG) are enriched in polar residues. 38 cysteine pairs are disulfide-bonded: Cys-445/Cys-472, Cys-446/Cys-479, Cys-459/Cys-480, Cys-489/Cys-518, Cys-502/Cys-519, Cys-521/Cys-545, Cys-522/Cys-552, Cys-535/Cys-553, Cys-608/Cys-620, Cys-616/Cys-629, Cys-631/Cys-644, Cys-683/Cys-693, Cys-689/Cys-702, Cys-704/Cys-717, Cys-723/Cys-736, Cys-730/Cys-745, Cys-751/Cys-762, Cys-768/Cys-781, Cys-775/Cys-790, Cys-796/Cys-808, Cys-814/Cys-827, Cys-821/Cys-836, Cys-843/Cys-856, Cys-862/Cys-875, Cys-869/Cys-884, Cys-886/Cys-899, Cys-905/Cys-917, Cys-913/Cys-926, Cys-928/Cys-941, Cys-947/Cys-956, Cys-952/Cys-965, Cys-967/Cys-980, Cys-986/Cys-998, Cys-994/Cys-1007, Cys-1009/Cys-1023, Cys-1029/Cys-1042, Cys-1036/Cys-1051, and Cys-1056/Cys-1068. Anaphylatoxin-like domains are found at residues 445-480 (CCAAGQQWAIDNDECLEIPESGTEDNVCRTAQRHCC), 488-519 (SCMAGVLGAKEGETCGAEDNDSCGISLYKQCC), and 521-553 (CCGLGLRVRAEGQSCESNPNLGYPCNHVMLSCC). A glycan (N-linked (GlcNAc...) asparagine) is linked at Asn-507. The EGF-like 1; calcium-binding domain occupies 604–645 (DQDECLLLPGELCQHLCINTVGSYHCACFPGFSLQDDGRTCR). The EGF-like 2 domain occupies 679-718 (QPNTCKDNGPCKQVCSTVGGSAICSCFPGYAIMADGVSCE). One can recognise an EGF-like 3; calcium-binding domain in the interval 719–763 (DINECVTDLHTCSRGEHCVNTLGSFHCYKALTCEPGYALKDGECE). The 46-residue stretch at 764 to 809 (DVDECAMGTHTCQPGFLCQNTKGSFYCQARQRCMDGFLQDPEGNCV) folds into the EGF-like 4; calcium-binding domain. In terms of domain architecture, EGF-like 5; calcium-binding spans 810–857 (DINECTSLSEPCRPGFSCINTVGSYTCQRNPLICARGYHASDDGTKCV). The EGF-like 6; calcium-binding domain occupies 858–900 (DVNECETGVHRCGEGQVCHNLPGSYRCDCKAGFQRDAFGRGCI). The EGF-like 7; calcium-binding domain maps to 901 to 942 (DVNECWASPGRLCQHTCENTLGSYRCSCASGFLLAADGKRCE). The EGF-like 8; calcium-binding domain maps to 943–981 (DVNECEAQRCSQECANIYGSYQCYCRQGYQLAEDGHTCT). In terms of domain architecture, EGF-like 9; calcium-binding spans 982–1024 (DIDECAQGAGILCTFRCLNVPGSYQCACPEQGYTMTANGRSCK). The region spanning 1025 to 1069 (DVDECALGTHNCSEAETCHNIQGSFRCLRFECPPNYVQVSKTKCE) is the EGF-like 10; calcium-binding domain. Asn-1035 is a glycosylation site (N-linked (GlcNAc...) asparagine). The segment at 1070–1184 (RTTCHDFLEC…MHIFFTTFAL (115 aa)) is domain III.

The protein belongs to the fibulin family. Homotrimer; disulfide-linked. Interacts with LAMA2. Interacts with FBN1 (via N-terminal domain). Forms a ternary complex with ELN and FBN1. In terms of processing, O-glycosylated with core 1 or possibly core 8 glycans. It is unsure if the O-glycosylation is on Thr-347 or Ser-348. In terms of tissue distribution, component of both basement membranes and other connective tissues. Expressed in heart, placenta and ovary.

Its subcellular location is the secreted. It localises to the extracellular space. It is found in the extracellular matrix. In terms of biological role, its binding to fibronectin and some other ligands is calcium dependent. May act as an adapter that mediates the interaction between FBN1 and ELN. The chain is Fibulin-2 (FBLN2) from Homo sapiens (Human).